Consider the following 180-residue polypeptide: dCTP deaminase, dUMP-forming (180 aa).

DCTP contacts are provided by residues arginine 96–arginine 101, aspartate 113, threonine 121–glutamate 123, glutamine 142, tyrosine 156, and glutamine 163. The active-site Proton donor/acceptor is glutamate 123.

This sequence belongs to the dCTP deaminase family. Homotrimer.

The enzyme catalyses dCTP + 2 H2O = dUMP + NH4(+) + diphosphate. Its pathway is pyrimidine metabolism; dUMP biosynthesis; dUMP from dCTP: step 1/1. In terms of biological role, bifunctional enzyme that catalyzes both the deamination of dCTP to dUTP and the hydrolysis of dUTP to dUMP without releasing the toxic dUTP intermediate. This chain is dCTP deaminase, dUMP-forming, found in Aquifex aeolicus (strain VF5).